A 259-amino-acid polypeptide reads, in one-letter code: Ribosomal RNA large subunit methyltransferase E (259 aa).

5 residues coordinate S-adenosyl-L-methionine: glycine 58, tryptophan 60, aspartate 78, aspartate 96, and aspartate 120. Lysine 160 (proton acceptor) is an active-site residue.

This sequence belongs to the class I-like SAM-binding methyltransferase superfamily. RNA methyltransferase RlmE family.

Its subcellular location is the cytoplasm. The catalysed reaction is uridine(2552) in 23S rRNA + S-adenosyl-L-methionine = 2'-O-methyluridine(2552) in 23S rRNA + S-adenosyl-L-homocysteine + H(+). Specifically methylates the uridine in position 2552 of 23S rRNA at the 2'-O position of the ribose in the fully assembled 50S ribosomal subunit. The chain is Ribosomal RNA large subunit methyltransferase E from Methanococcus vannielii (strain ATCC 35089 / DSM 1224 / JCM 13029 / OCM 148 / SB).